Consider the following 132-residue polypeptide: Small ribosomal subunit protein uS8 (132 aa).

Belongs to the universal ribosomal protein uS8 family. In terms of assembly, part of the 30S ribosomal subunit. Contacts proteins S5 and S12.

Functionally, one of the primary rRNA binding proteins, it binds directly to 16S rRNA central domain where it helps coordinate assembly of the platform of the 30S subunit. The chain is Small ribosomal subunit protein uS8 from Stenotrophomonas maltophilia (strain K279a).